A 105-amino-acid polypeptide reads, in one-letter code: Small ribosomal subunit protein uS10 (105 aa).

This sequence belongs to the universal ribosomal protein uS10 family. In terms of assembly, part of the 30S ribosomal subunit.

Its function is as follows. Involved in the binding of tRNA to the ribosomes. The protein is Small ribosomal subunit protein uS10 of Nostoc punctiforme (strain ATCC 29133 / PCC 73102).